We begin with the raw amino-acid sequence, 1093 residues long: Mediator of RNA polymerase II transcription subunit 14 (1093 aa).

Disordered regions lie at residues 1–61 and 1035–1060; these read MPGV…KIDG and TKSD…SQAA. The span at 19 to 31 shows a compositional bias: polar residues; sequence DTQTPSNGDNLRN. A compositionally biased stretch (basic and acidic residues) spans 41–61; the sequence is KGDKDHDPDKESYTGKPKIDG. The segment covering 1040 to 1056 has biased composition (polar residues); that stretch reads DYSTQPVPEKQSQTGAP.

The protein belongs to the Mediator complex subunit 14 family. As to quaternary structure, component of the Mediator complex.

It is found in the nucleus. In terms of biological role, component of the Mediator complex, a coactivator involved in the regulated transcription of nearly all RNA polymerase II-dependent genes. Mediator functions as a bridge to convey information from gene-specific regulatory proteins to the basal RNA polymerase II transcription machinery. Mediator is recruited to promoters by direct interactions with regulatory proteins and serves as a scaffold for the assembly of a functional preinitiation complex with RNA polymerase II and the general transcription factors. In Neosartorya fischeri (strain ATCC 1020 / DSM 3700 / CBS 544.65 / FGSC A1164 / JCM 1740 / NRRL 181 / WB 181) (Aspergillus fischerianus), this protein is Mediator of RNA polymerase II transcription subunit 14 (rgr1).